We begin with the raw amino-acid sequence, 182 residues long: Hypoxanthine/guanine phosphoribosyltransferase (182 aa).

It belongs to the purine/pyrimidine phosphoribosyltransferase family. Archaeal HPRT subfamily. In terms of assembly, homodimer.

The protein localises to the cytoplasm. The catalysed reaction is IMP + diphosphate = hypoxanthine + 5-phospho-alpha-D-ribose 1-diphosphate. It carries out the reaction GMP + diphosphate = guanine + 5-phospho-alpha-D-ribose 1-diphosphate. It functions in the pathway purine metabolism; IMP biosynthesis via salvage pathway; IMP from hypoxanthine: step 1/1. Catalyzes a salvage reaction resulting in the formation of IMP that is energically less costly than de novo synthesis. The sequence is that of Hypoxanthine/guanine phosphoribosyltransferase from Methanosphaerula palustris (strain ATCC BAA-1556 / DSM 19958 / E1-9c).